Consider the following 629-residue polypeptide: 1-deoxy-D-xylulose-5-phosphate synthase (629 aa).

Residues histidine 72 and glycine 113 to alanine 115 contribute to the thiamine diphosphate site. Position 144 (aspartate 144) interacts with Mg(2+). Thiamine diphosphate-binding positions include glycine 145–alanine 146, asparagine 174, tyrosine 287, and glutamate 370. Asparagine 174 is a binding site for Mg(2+).

It belongs to the transketolase family. DXPS subfamily. In terms of assembly, homodimer. Mg(2+) serves as cofactor. It depends on thiamine diphosphate as a cofactor.

It carries out the reaction D-glyceraldehyde 3-phosphate + pyruvate + H(+) = 1-deoxy-D-xylulose 5-phosphate + CO2. It participates in metabolic intermediate biosynthesis; 1-deoxy-D-xylulose 5-phosphate biosynthesis; 1-deoxy-D-xylulose 5-phosphate from D-glyceraldehyde 3-phosphate and pyruvate: step 1/1. Its function is as follows. Catalyzes the acyloin condensation reaction between C atoms 2 and 3 of pyruvate and glyceraldehyde 3-phosphate to yield 1-deoxy-D-xylulose-5-phosphate (DXP). The chain is 1-deoxy-D-xylulose-5-phosphate synthase from Prochlorococcus marinus (strain MIT 9215).